The chain runs to 234 residues: Putative B3 domain-containing protein At2g18810 (234 aa).

The tract at residues 55–88 is disordered; it reads CKNQDPEQNPNRVASSPSLCHVKSKRPQKGVSNK. The span at 60 to 72 shows a compositional bias: polar residues; that stretch reads PEQNPNRVASSPS. Positions 87-185 form a DNA-binding region, TF-B3; sequence NKPILDMDFL…MLFFALVLSD (99 aa).

It is found in the nucleus. The chain is Putative B3 domain-containing protein At2g18810 from Arabidopsis thaliana (Mouse-ear cress).